Consider the following 445-residue polypeptide: Exodeoxyribonuclease 7 large subunit (445 aa).

The protein belongs to the XseA family. In terms of assembly, heterooligomer composed of large and small subunits.

It localises to the cytoplasm. It catalyses the reaction Exonucleolytic cleavage in either 5'- to 3'- or 3'- to 5'-direction to yield nucleoside 5'-phosphates.. Its function is as follows. Bidirectionally degrades single-stranded DNA into large acid-insoluble oligonucleotides, which are then degraded further into small acid-soluble oligonucleotides. The protein is Exodeoxyribonuclease 7 large subunit of Xanthomonas oryzae pv. oryzae (strain MAFF 311018).